A 301-amino-acid polypeptide reads, in one-letter code: Protoheme IX farnesyltransferase (301 aa).

A run of 9 helical transmembrane segments spans residues V16–P36, I41–I61, V93–I113, T114–K134, I141–G161, S172–F192, Q217–M237, S238–W258, and F273–L293.

It belongs to the UbiA prenyltransferase family. Protoheme IX farnesyltransferase subfamily.

Its subcellular location is the cell inner membrane. It carries out the reaction heme b + (2E,6E)-farnesyl diphosphate + H2O = Fe(II)-heme o + diphosphate. The protein operates within porphyrin-containing compound metabolism; heme O biosynthesis; heme O from protoheme: step 1/1. Its function is as follows. Converts heme B (protoheme IX) to heme O by substitution of the vinyl group on carbon 2 of heme B porphyrin ring with a hydroxyethyl farnesyl side group. This chain is Protoheme IX farnesyltransferase, found in Xylella fastidiosa (strain Temecula1 / ATCC 700964).